The primary structure comprises 514 residues: Putative fumarate hydratase class I (514 aa).

3 residues coordinate [4Fe-4S] cluster: Cys62, Cys187, and Cys274.

It belongs to the class-I fumarase family. In terms of assembly, homodimer. It depends on [4Fe-4S] cluster as a cofactor.

The catalysed reaction is (S)-malate = fumarate + H2O. Its pathway is carbohydrate metabolism; tricarboxylic acid cycle; (S)-malate from fumarate: step 1/1. In terms of biological role, catalyzes the reversible hydration of fumarate to (S)-malate. The chain is Putative fumarate hydratase class I (fumA) from Geobacillus stearothermophilus (Bacillus stearothermophilus).